Reading from the N-terminus, the 259-residue chain is Peroxisomal membrane protein 11B (259 aa).

At Lys-43 the chain carries N6-acetyllysine. The interval 157-176 (LKGSGGGVPGGSETGGLGGP) is disordered. Gly residues predominate over residues 159-176 (GSGGGVPGGSETGGLGGP). The interaction with PEX19, PEX11G and FIS1 and peroxisome targeting stretch occupies residues 211-259 (VVRNACDLFIPLDKLGLWRCGPGIVGLCGLVSSILSILTLIYPWLRLKP). Residues 233–255 (GIVGLCGLVSSILSILTLIYPWL) form a helical membrane-spanning segment.

Belongs to the peroxin-11 family. In terms of assembly, homodimer. Heterodimer with PEX11G. Interacts with PEX19. Interacts with FIS1.

The protein resides in the peroxisome membrane. Its function is as follows. Involved in peroxisomal proliferation. May regulate peroxisome division by recruiting the dynamin-related GTPase DNM1L to the peroxisomal membrane. Promotes membrane protrusion and elongation on the peroxisomal surface. This is Peroxisomal membrane protein 11B (PEX11B) from Homo sapiens (Human).